The primary structure comprises 158 residues: Biotin carboxyl carrier protein of acetyl-CoA carboxylase (158 aa).

In terms of domain architecture, Biotinyl-binding spans 81-157 (YATIVSPMVG…DCGQALMKVE (77 aa)). Lysine 123 carries the post-translational modification N6-biotinyllysine.

It localises to the plastid. Its subcellular location is the chloroplast. It participates in lipid metabolism; fatty acid biosynthesis. This protein is a component of the acetyl coenzyme A carboxylase complex; first, biotin carboxylase catalyzes the carboxylation of the carrier protein and then the transcarboxylase transfers the carboxyl group to form malonyl-CoA. The chain is Biotin carboxyl carrier protein of acetyl-CoA carboxylase (accB) from Pyropia yezoensis (Susabi-nori).